Here is a 497-residue protein sequence, read N- to C-terminus: tRNA-2-methylthio-N(6)-dimethylallyladenosine synthase (497 aa).

The MTTase N-terminal domain occupies 4–120; sequence RSYEVRTFGC…LPVLLERARH (117 aa). 6 residues coordinate [4Fe-4S] cluster: C13, C49, C83, C157, C161, and C164. The Radical SAM core domain occupies 143–374; the sequence is RASHHSAWVS…ALQDEVSWAQ (232 aa). The TRAM domain maps to 376–445; that stretch reads RELVGRRVEL…PHHLTADGPL (70 aa).

The protein belongs to the methylthiotransferase family. MiaB subfamily. As to quaternary structure, monomer. [4Fe-4S] cluster serves as cofactor.

It localises to the cytoplasm. The catalysed reaction is N(6)-dimethylallyladenosine(37) in tRNA + (sulfur carrier)-SH + AH2 + 2 S-adenosyl-L-methionine = 2-methylsulfanyl-N(6)-dimethylallyladenosine(37) in tRNA + (sulfur carrier)-H + 5'-deoxyadenosine + L-methionine + A + S-adenosyl-L-homocysteine + 2 H(+). Catalyzes the methylthiolation of N6-(dimethylallyl)adenosine (i(6)A), leading to the formation of 2-methylthio-N6-(dimethylallyl)adenosine (ms(2)i(6)A) at position 37 in tRNAs that read codons beginning with uridine. This chain is tRNA-2-methylthio-N(6)-dimethylallyladenosine synthase, found in Frankia alni (strain DSM 45986 / CECT 9034 / ACN14a).